The primary structure comprises 28 residues: 14-3-3-like protein 4 (28 aa).

This sequence belongs to the 14-3-3 family.

This chain is 14-3-3-like protein 4, found in Pseudotsuga menziesii (Douglas-fir).